A 522-amino-acid chain; its full sequence is MTARPPESCVLAKDRPEEPVVPVVSPGPLVPVADFGPLDRLRGWIVTGLITLLATVTRFLNLGSLTDAGTPIFDEKHYAPQAWQVLNNHGVEDNPGYGLVVHPPVGKQLIAIGEAIFGYNGFGWRFTGALLGVVLVALVVRIVRRISRSTLVGAIAGVLLICDGVSFVTARTALLDGFLTFFVVAAFGALIVDRDQVRERMHIALLAGRSAATVWGPRVGVRWWRFGAGVLLGLACATKWSGVYFVLFFGAMALAFDVAARRQYQVQRPWLGTVRRDVLPSGYALGLIPFAVYLATYAPWFASETAIDRHAVGQAVGRNSVVPLPDAVRSLWHYTAKAFHFHAGLTNSAGNYHPWESKPWTWPMSLRPVLYAIDQQDVAGCGAQSCVKAEMLVGTPAMWWLAVPVLAYAGWRMFVRRDWRYAVVLVGYCAGWLPWFADIDRQMYFFYAATMAPFLVMGISLVLGDILYHPGQGSERRTLGLIVVCCYVALVVTNFAWLYPVLTGLPISQQTWNLEIWLPSWR.

The Cytoplasmic portion of the chain corresponds to Met1–Arg42. A helical membrane pass occupies residues Gly43–Gly63. Topologically, residues Ser64–Tyr119 are extracellular. Residues Asn120–Val140 form a helical membrane-spanning segment. The Cytoplasmic portion of the chain corresponds to Arg141–Ser149. A helical transmembrane segment spans residues Thr150–Ala170. A topological domain (extracellular) is located at residue Arg171. The helical transmembrane segment at Thr172–Val192 threads the bilayer. The Cytoplasmic segment spans residues Asp193–Lys239. Residues Trp240–Ala260 traverse the membrane as a helical segment. Residues Arg261 to Ser281 are Extracellular-facing. Residues Gly282–Ala302 traverse the membrane as a helical segment. The Cytoplasmic segment spans residues Ser303–Glu390. Residues Met391–Trp411 traverse the membrane as a helical segment. The Extracellular segment spans residues Arg412–Asp418. A helical transmembrane segment spans residues Trp419–Ile439. Residues Asp440–Gln442 are Cytoplasmic-facing. A helical membrane pass occupies residues Met443–Leu463. Topologically, residues Gly464–Thr478 are extracellular. A helical transmembrane segment spans residues Leu479–Tyr499. Topologically, residues Pro500–Arg522 are cytoplasmic.

The protein belongs to the glycosyltransferase 39 family.

The protein resides in the cell membrane. Its pathway is protein modification; protein glycosylation. In terms of biological role, protein O-mannosyltransferase that catalyzes the transfer of a single mannose residue from a polyprenol phospho-mannosyl lipidic donor to the hydroxyl group of selected serine and threonine residues in acceptor proteins. The sequence is that of Polyprenol-phosphate-mannose--protein mannosyltransferase (pmt) from Mycobacterium tuberculosis (strain CDC 1551 / Oshkosh).